The chain runs to 256 residues: UPF0246 protein Swoo_1284 (256 aa).

It belongs to the UPF0246 family.

The polypeptide is UPF0246 protein Swoo_1284 (Shewanella woodyi (strain ATCC 51908 / MS32)).